The sequence spans 506 residues: Probable cytosol aminopeptidase (506 aa).

Mn(2+)-binding residues include Lys-270 and Asp-275. Lys-282 is an active-site residue. The Mn(2+) site is built by Asp-293, Asp-352, and Glu-354. Arg-356 is an active-site residue.

The protein belongs to the peptidase M17 family. The cofactor is Mn(2+).

The protein localises to the cytoplasm. It catalyses the reaction Release of an N-terminal amino acid, Xaa-|-Yaa-, in which Xaa is preferably Leu, but may be other amino acids including Pro although not Arg or Lys, and Yaa may be Pro. Amino acid amides and methyl esters are also readily hydrolyzed, but rates on arylamides are exceedingly low.. The catalysed reaction is Release of an N-terminal amino acid, preferentially leucine, but not glutamic or aspartic acids.. Functionally, presumably involved in the processing and regular turnover of intracellular proteins. Catalyzes the removal of unsubstituted N-terminal amino acids from various peptides. This is Probable cytosol aminopeptidase from Photorhabdus laumondii subsp. laumondii (strain DSM 15139 / CIP 105565 / TT01) (Photorhabdus luminescens subsp. laumondii).